We begin with the raw amino-acid sequence, 438 residues long: Xylose isomerase (438 aa).

Active-site residues include His-100 and Asp-103. Mg(2+) is bound by residues Glu-231, Glu-267, His-270, Asp-295, Asp-306, Asp-308, and Asp-338.

This sequence belongs to the xylose isomerase family. Homotetramer. Mg(2+) is required as a cofactor.

It localises to the cytoplasm. It catalyses the reaction alpha-D-xylose = alpha-D-xylulofuranose. The chain is Xylose isomerase from Thermoanaerobacter sp. (strain X514).